We begin with the raw amino-acid sequence, 266 residues long: Large ribosomal subunit protein eL8 (266 aa).

Residues Lys11, Lys20, and Lys21 each participate in a glycyl lysine isopeptide (Lys-Gly) (interchain with G-Cter in SUMO2) cross-link. Residue Lys34 is modified to N6-acetyllysine. Lys48 is covalently cross-linked (Glycyl lysine isopeptide (Lys-Gly) (interchain with G-Cter in SUMO2)). Lys97 carries the N6-acetyllysine; alternate modification. Residue Lys97 forms a Glycyl lysine isopeptide (Lys-Gly) (interchain with G-Cter in SUMO2); alternate linkage. A Glycyl lysine isopeptide (Lys-Gly) (interchain with G-Cter in SUMO2) cross-link involves residue Lys125. An N6-acetyllysine modification is found at Lys217. Lys245 participates in a covalent cross-link: Glycyl lysine isopeptide (Lys-Gly) (interchain with G-Cter in SUMO2).

The protein belongs to the eukaryotic ribosomal protein eL8 family. As to quaternary structure, component of the large ribosomal subunit. Interacts with CRY1. Interacts with DICER1, AGO2, TARBP2, MOV10 and EIF6; they form a large RNA-induced silencing complex (RISC).

It localises to the cytoplasm. In terms of biological role, component of the large ribosomal subunit. The ribosome is a large ribonucleoprotein complex responsible for the synthesis of proteins in the cell. The sequence is that of Large ribosomal subunit protein eL8 (Rpl7a) from Mus musculus (Mouse).